Here is a 128-residue protein sequence, read N- to C-terminus: Large ribosomal subunit protein bL12 (128 aa).

As to quaternary structure, homodimer. Part of the 50S ribosomal subunit; present in 6 copies per ribosome. Forms part of the ribosomal stalk which helps the ribosome interact with GTP-bound translation factors. Forms a heptameric L10(L12)2(L12)2(L12)2 complex, where L10 forms an elongated spine to which 3 L12 dimers bind in a sequential fashion.

In terms of biological role, forms part of the ribosomal stalk which helps the ribosome interact with GTP-bound translation factors. Is thus essential for accurate translation. The sequence is that of Large ribosomal subunit protein bL12 from Thermotoga maritima (strain ATCC 43589 / DSM 3109 / JCM 10099 / NBRC 100826 / MSB8).